The primary structure comprises 447 residues: Argininosuccinate synthase (447 aa).

ATP contacts are provided by residues 17–25 (AFSGGLDTS) and alanine 43. Residue tyrosine 99 participates in L-citrulline binding. Positions 129 and 131 each coordinate ATP. Residues threonine 131, asparagine 135, and aspartate 136 each contribute to the L-aspartate site. Asparagine 135 is a binding site for L-citrulline. Aspartate 136 lines the ATP pocket. L-citrulline is bound by residues arginine 139 and serine 192. Aspartate 194 provides a ligand contact to ATP. 3 residues coordinate L-citrulline: threonine 201, glutamate 203, and glutamate 280.

Belongs to the argininosuccinate synthase family. Type 2 subfamily. As to quaternary structure, homotetramer.

It is found in the cytoplasm. The catalysed reaction is L-citrulline + L-aspartate + ATP = 2-(N(omega)-L-arginino)succinate + AMP + diphosphate + H(+). It functions in the pathway amino-acid biosynthesis; L-arginine biosynthesis; L-arginine from L-ornithine and carbamoyl phosphate: step 2/3. This chain is Argininosuccinate synthase, found in Escherichia coli (strain K12 / MC4100 / BW2952).